We begin with the raw amino-acid sequence, 439 residues long: Gnt-II system L-idonate transporter (439 aa).

Topologically, residues 1–11 (MPLIIIAAGVA) are periplasmic. A helical transmembrane segment spans residues 12-34 (LLLILMIGFKVNGFIALVLVAAV). Residues 35-53 (VGFAEGMDAQAVLHSIQNG) are Cytoplasmic-facing. A helical transmembrane segment spans residues 54–76 (IGSTLGGLAMILGFGAMLGKLIS). Over 77-96 (DTGAAQRIATTLIATFGKKR) the chain is Periplasmic. The chain crosses the membrane as a helical span at residues 97 to 114 (VQWALVITGLVVGLAMFF). At 115–118 (EVGF) the chain is on the cytoplasmic side. A helical transmembrane segment spans residues 119–141 (VLLLPLVFTIVASSGLPLLYVGV). Over 142–170 (PMVAALSVTHCFLPPHPGPTAIATIFEAN) the chain is Periplasmic. Residues 171 to 193 (LGTTLLYGFIITIPTVIVAGPLF) traverse the membrane as a helical segment. At 194-218 (SKLLTRFEKAPPEGLFNPHLFSEEE) the chain is on the cytoplasmic side. The chain crosses the membrane as a helical span at residues 219–241 (MPSFWNSIFAAVIPVILMAIAAV). The Periplasmic segment spans residues 242–253 (CEITLPKTNTVR). The chain crosses the membrane as a helical span at residues 254 to 276 (LFFEFVGNPAVALFIAIVIAIFT). Residues 277–290 (LGRRNGRTIEQIMD) lie on the Cytoplasmic side of the membrane. Residues 291 to 310 (IIGDSIGAIAMIVFIIAGGG) traverse the membrane as a helical segment. The Periplasmic segment spans residues 311 to 322 (AFKQVLVDSGVG). A helical transmembrane segment spans residues 323–345 (HYISHLMTGTTLSPLLMCWTVAA). At 346–348 (LLR) the chain is on the cytoplasmic side. Residues 349–371 (IALGSATVAAITTAGVVLPIINV) form a helical membrane-spanning segment. Residues 372-377 (THADPA) are Periplasmic-facing. The helical transmembrane segment at 378–400 (LMVLATGAGSVIASHVNDPGFWL) threads the bilayer. At 401–414 (FKGYFNLTVGETLR) the chain is on the cytoplasmic side. Residues 415-437 (TWTVMETLISIMGLLGVLAINAV) traverse the membrane as a helical segment. The Periplasmic segment spans residues 438–439 (LH).

This sequence belongs to the GntP permease family.

The protein resides in the cell inner membrane. It catalyses the reaction L-idonate(in) + H(+)(in) = L-idonate(out) + H(+)(out). It carries out the reaction D-gluconate(in) + H(+)(in) = D-gluconate(out) + H(+)(out). The catalysed reaction is 5-dehydro-D-gluconate(in) + H(+)(in) = 5-dehydro-D-gluconate(out) + H(+)(out). It functions in the pathway carbohydrate acid metabolism; L-idonate degradation. Functionally, transporter which is probably involved in L-idonate metabolism. Transports L-idonate from the periplasm across the inner membrane. Can also transport D-gluconate and 5-keto-D-gluconate. It has been reported that gluconate uptake probably occurs via a proton-symport mechanism in E.coli. The protein is Gnt-II system L-idonate transporter of Escherichia coli (strain K12).